The chain runs to 443 residues: GPI mannosyltransferase 1 (443 aa).

The next 11 membrane-spanning stretches (helical) occupy residues proline 8–tryptophan 28, proline 68–glycine 88, alanine 90–threonine 110, threonine 136–leucine 156, isoleucine 160–tyrosine 180, leucine 232–glycine 252, phenylalanine 273–valine 291, phenylalanine 302–leucine 322, serine 347–leucine 367, isoleucine 374–leucine 394, and leucine 406–alanine 426.

Belongs to the PIGM family.

The protein localises to the endoplasmic reticulum membrane. The protein operates within glycolipid biosynthesis; glycosylphosphatidylinositol-anchor biosynthesis. In terms of biological role, mannosyltransferase involved in glycosylphosphatidylinositol-anchor biosynthesis. Transfers the first alpha-1,4-mannose to GlcN-acyl-PI during GPI precursor assembly. Required for cell wall integrity. This is GPI mannosyltransferase 1 (gpi14) from Emericella nidulans (strain FGSC A4 / ATCC 38163 / CBS 112.46 / NRRL 194 / M139) (Aspergillus nidulans).